The chain runs to 457 residues: UDP-N-acetylmuramoyl-tripeptide--D-alanyl-D-alanine ligase (457 aa).

An ATP-binding site is contributed by 113–119 (GSNGKTT).

The protein belongs to the MurCDEF family. MurF subfamily.

It is found in the cytoplasm. It catalyses the reaction D-alanyl-D-alanine + UDP-N-acetyl-alpha-D-muramoyl-L-alanyl-gamma-D-glutamyl-meso-2,6-diaminopimelate + ATP = UDP-N-acetyl-alpha-D-muramoyl-L-alanyl-gamma-D-glutamyl-meso-2,6-diaminopimeloyl-D-alanyl-D-alanine + ADP + phosphate + H(+). It functions in the pathway cell wall biogenesis; peptidoglycan biosynthesis. In terms of biological role, involved in cell wall formation. Catalyzes the final step in the synthesis of UDP-N-acetylmuramoyl-pentapeptide, the precursor of murein. In Bacillus subtilis (strain 168), this protein is UDP-N-acetylmuramoyl-tripeptide--D-alanyl-D-alanine ligase.